We begin with the raw amino-acid sequence, 108 residues long: ATP-dependent Clp protease adapter protein ClpS (108 aa).

Over residues 1 to 15 (MPHESSPDSQHEHGV) the composition is skewed to basic and acidic residues. The segment at 1 to 22 (MPHESSPDSQHEHGVAVEAARP) is disordered.

This sequence belongs to the ClpS family. In terms of assembly, binds to the N-terminal domain of the chaperone ClpA.

In terms of biological role, involved in the modulation of the specificity of the ClpAP-mediated ATP-dependent protein degradation. The protein is ATP-dependent Clp protease adapter protein ClpS of Stenotrophomonas maltophilia (strain K279a).